Reading from the N-terminus, the 363-residue chain is Peptide chain release factor 1 (363 aa).

Position 237 is an N5-methylglutamine (glutamine 237). A compositionally biased stretch (basic and acidic residues) spans 286–295 (EKRRSAEATT). The interval 286–305 (EKRRSAEATTRRNLVGSGDR) is disordered.

It belongs to the prokaryotic/mitochondrial release factor family. In terms of processing, methylated by PrmC. Methylation increases the termination efficiency of RF1.

It is found in the cytoplasm. Peptide chain release factor 1 directs the termination of translation in response to the peptide chain termination codons UAG and UAA. This chain is Peptide chain release factor 1, found in Shewanella amazonensis (strain ATCC BAA-1098 / SB2B).